Reading from the N-terminus, the 261-residue chain is Phosphoadenosine phosphosulfate reductase (261 aa).

Belongs to the PAPS reductase family. CysH subfamily.

It catalyses the reaction [thioredoxin]-disulfide + sulfite + adenosine 3',5'-bisphosphate + 2 H(+) = [thioredoxin]-dithiol + 3'-phosphoadenylyl sulfate. It participates in sulfur metabolism; hydrogen sulfide biosynthesis; sulfite from sulfate: step 3/3. Its function is as follows. The NADP dependent reduction of PAPS into sulfite involves thioredoxin which probably plays the role of a thiol carrier. This chain is Phosphoadenosine phosphosulfate reductase (MET16), found in Saccharomyces cerevisiae (strain ATCC 204508 / S288c) (Baker's yeast).